We begin with the raw amino-acid sequence, 172 residues long: Large ribosomal subunit protein uL10 (172 aa).

Belongs to the universal ribosomal protein uL10 family. As to quaternary structure, part of the ribosomal stalk of the 50S ribosomal subunit. The N-terminus interacts with L11 and the large rRNA to form the base of the stalk. The C-terminus forms an elongated spine to which L12 dimers bind in a sequential fashion forming a multimeric L10(L12)X complex.

Forms part of the ribosomal stalk, playing a central role in the interaction of the ribosome with GTP-bound translation factors. The protein is Large ribosomal subunit protein uL10 of Brucella anthropi (strain ATCC 49188 / DSM 6882 / CCUG 24695 / JCM 21032 / LMG 3331 / NBRC 15819 / NCTC 12168 / Alc 37) (Ochrobactrum anthropi).